The chain runs to 257 residues: GTP cyclohydrolase FolE2 (257 aa).

This sequence belongs to the GTP cyclohydrolase IV family.

The enzyme catalyses GTP + H2O = 7,8-dihydroneopterin 3'-triphosphate + formate + H(+). It functions in the pathway cofactor biosynthesis; 7,8-dihydroneopterin triphosphate biosynthesis; 7,8-dihydroneopterin triphosphate from GTP: step 1/1. Functionally, converts GTP to 7,8-dihydroneopterin triphosphate. The chain is GTP cyclohydrolase FolE2 from Pelobacter propionicus (strain DSM 2379 / NBRC 103807 / OttBd1).